The primary structure comprises 455 residues: Bifunctional protein GlmU (455 aa).

Residues 1–232 (MASITGALIL…DPNLLGVNDP (232 aa)) are pyrophosphorylase. Residues 10–13 (LAAG), Lys-24, Gln-75, and 80–81 (GT) contribute to the UDP-N-acetyl-alpha-D-glucosamine site. Position 106 (Asp-106) interacts with Mg(2+). Positions 141, 155, 172, and 230 each coordinate UDP-N-acetyl-alpha-D-glucosamine. Residue Asn-230 coordinates Mg(2+). The interval 233–253 (AELIRSEALVRARIALNWIEK) is linker. Residues 254-455 (RVLIHAPETV…QTTLPRRRNS (202 aa)) are N-acetyltransferase. UDP-N-acetyl-alpha-D-glucosamine-binding residues include Arg-336 and Lys-354. The active-site Proton acceptor is His-366. 2 residues coordinate UDP-N-acetyl-alpha-D-glucosamine: Tyr-369 and Asn-380. Acetyl-CoA contacts are provided by residues Ala-383, 389-390 (NY), Ser-408, Ala-426, and Arg-443.

This sequence in the N-terminal section; belongs to the N-acetylglucosamine-1-phosphate uridyltransferase family. It in the C-terminal section; belongs to the transferase hexapeptide repeat family. Homotrimer. Mg(2+) serves as cofactor.

The protein resides in the cytoplasm. The catalysed reaction is alpha-D-glucosamine 1-phosphate + acetyl-CoA = N-acetyl-alpha-D-glucosamine 1-phosphate + CoA + H(+). It carries out the reaction N-acetyl-alpha-D-glucosamine 1-phosphate + UTP + H(+) = UDP-N-acetyl-alpha-D-glucosamine + diphosphate. It functions in the pathway nucleotide-sugar biosynthesis; UDP-N-acetyl-alpha-D-glucosamine biosynthesis; N-acetyl-alpha-D-glucosamine 1-phosphate from alpha-D-glucosamine 6-phosphate (route II): step 2/2. The protein operates within nucleotide-sugar biosynthesis; UDP-N-acetyl-alpha-D-glucosamine biosynthesis; UDP-N-acetyl-alpha-D-glucosamine from N-acetyl-alpha-D-glucosamine 1-phosphate: step 1/1. Its pathway is bacterial outer membrane biogenesis; LPS lipid A biosynthesis. In terms of biological role, catalyzes the last two sequential reactions in the de novo biosynthetic pathway for UDP-N-acetylglucosamine (UDP-GlcNAc). The C-terminal domain catalyzes the transfer of acetyl group from acetyl coenzyme A to glucosamine-1-phosphate (GlcN-1-P) to produce N-acetylglucosamine-1-phosphate (GlcNAc-1-P), which is converted into UDP-GlcNAc by the transfer of uridine 5-monophosphate (from uridine 5-triphosphate), a reaction catalyzed by the N-terminal domain. The chain is Bifunctional protein GlmU from Nitratidesulfovibrio vulgaris (strain DSM 19637 / Miyazaki F) (Desulfovibrio vulgaris).